Consider the following 348-residue polypeptide: GMP reductase (348 aa).

NADP(+) is bound at residue 108-131 (ADFQKTKDVMALSDELIFICIDIA). K(+) is bound by residues Gly-181 and Gly-183. Cys-186 functions as the Thioimidate intermediate in the catalytic mechanism. 216-239 (IIGDGGCACAGDVAKAFGGGADFV) lines the NADP(+) pocket.

Belongs to the IMPDH/GMPR family. GuaC type 1 subfamily. In terms of assembly, homotetramer.

The catalysed reaction is IMP + NH4(+) + NADP(+) = GMP + NADPH + 2 H(+). Its function is as follows. Catalyzes the irreversible NADPH-dependent deamination of GMP to IMP. It functions in the conversion of nucleobase, nucleoside and nucleotide derivatives of G to A nucleotides, and in maintaining the intracellular balance of A and G nucleotides. This chain is GMP reductase, found in Vibrio vulnificus (strain CMCP6).